Consider the following 405-residue polypeptide: MAVGLGPLPTLHPVAGFELGIASAGIKRPGRKDVVVMRCAEGSTVAGVFTLNAFCAAPVILAKKRVQNAVRYLLTNTGNANAGTGEPGLAAAERTTAKLAELTGVDASQILPYSTGVIGEPLPVEKIEGALQAALDDLSENNWEAAATGIMTTDTLPKGASRQFQHDGVTITVTGISKGAGMIRPNMATMLGYIATDAKVSRDVLQNLMLDGANKSFNRITIDGDTSTNDCCMLIATGKAALPEINRAEGELFAKLKQAVFEVCMDVAQAIVRDGEGATKFVTVEVNGGGNHQECLDVGYTVAHSPLIKTALFASDPNWGRILAAVGRAGVPDLDVSKIDVFLGEVCIASRGARAATYTEAQGSAVMQQEEITIRIELGRGDCSETIWTTDLSHEYVKINAEYRT.

T152, K178, T189, E276, N400, and T405 together coordinate substrate. The Nucleophile role is filled by T189.

This sequence belongs to the ArgJ family. Heterotetramer of two alpha and two beta chains.

Its subcellular location is the cytoplasm. The catalysed reaction is N(2)-acetyl-L-ornithine + L-glutamate = N-acetyl-L-glutamate + L-ornithine. It catalyses the reaction L-glutamate + acetyl-CoA = N-acetyl-L-glutamate + CoA + H(+). It participates in amino-acid biosynthesis; L-arginine biosynthesis; L-ornithine and N-acetyl-L-glutamate from L-glutamate and N(2)-acetyl-L-ornithine (cyclic): step 1/1. It functions in the pathway amino-acid biosynthesis; L-arginine biosynthesis; N(2)-acetyl-L-ornithine from L-glutamate: step 1/4. Its function is as follows. Catalyzes two activities which are involved in the cyclic version of arginine biosynthesis: the synthesis of N-acetylglutamate from glutamate and acetyl-CoA as the acetyl donor, and of ornithine by transacetylation between N(2)-acetylornithine and glutamate. This Pseudomonas fluorescens (strain Pf0-1) protein is Arginine biosynthesis bifunctional protein ArgJ.